The chain runs to 1377 residues: Neogenin (1377 aa).

The N-terminal stretch at 1–2 (AA) is a signal peptide. The Extracellular segment spans residues 3-1074 (AKNGSPPQSA…PTSPLDSNML (1072 aa)). 4 Ig-like C2-type domains span residues 21-114 (PLYF…RTAK), 121-206 (PRFT…EAEL), 198-305 (PKFS…AELT), and 310-395 (PEFL…AQLI). The N-linked (GlcNAc...) asparagine glycan is linked to Asn-42. Cystine bridges form between Cys-43–Cys-98, Cys-142–Cys-190, and Cys-239–Cys-289. Asn-179 is a glycosylation site (N-linked (GlcNAc...) asparagine). Asn-295 carries an N-linked (GlcNAc...) asparagine glycan. Cys-331 and Cys-379 form a disulfide bridge. Fibronectin type-III domains are found at residues 410-504 (APRD…TQPE), 510-600 (PAPN…TLSD), 605-700 (APQN…TFES), 710-800 (VPSS…RPHT), 825-924 (PPVG…LVPT), and 926-1023 (PPKD…TPKA). 2 N-linked (GlcNAc...) asparagine glycosylation sites follow: Asn-439 and Asn-458. Asn-608 and Asn-684 each carry an N-linked (GlcNAc...) asparagine glycan. Residue Asn-878 is glycosylated (N-linked (GlcNAc...) asparagine). Residues 1010–1066 (GPMSEAVQFRTPKADSSDKMPNDQALGSAGKGGRLPDLGSDYKPPMSGSNSPHGSPT) are disordered. The segment covering 1021 to 1030 (PKADSSDKMP) has biased composition (basic and acidic residues). Positions 1056–1066 (SGSNSPHGSPT) are enriched in polar residues. A helical transmembrane segment spans residues 1075–1095 (LVIIVSIGVITIVVVVIIAVF). At 1096–1377 (CTRRTTSHQK…MKDLNAITTA (282 aa)) the chain is on the cytoplasmic side. Positions 1143–1281 (PIDKSPDPNP…SHPLKSFAVP (139 aa)) are disordered. Ser-1147 and Ser-1163 each carry phosphoserine. 3 stretches are compositionally biased toward polar residues: residues 1160-1176 (PRNSQDITPVDNSMDSN), 1213-1238 (QPPQQSVRNTPSTDTMPASSSQTCCT), and 1246-1265 (ATSSSYLASSQEEDSGQSLP). The residue at position 1167 (Thr-1167) is a Phosphothreonine. At Ser-1317 the chain carries Phosphoserine. Position 1320 is a phosphothreonine (Thr-1320). Phosphoserine occurs at positions 1348, 1350, and 1351.

It belongs to the immunoglobulin superfamily. DCC family. As to quaternary structure, interacts with MYO10. Interacts with RGMA and RGMB. Interacts with BMP2, BMP4, BMP6, and BMP7.

Its subcellular location is the cell membrane. Multi-functional cell surface receptor regulating cell adhesion in many diverse developmental processes, including neural tube and mammary gland formation, myogenesis and angiogenesis. Receptor for members of the BMP, netrin, and repulsive guidance molecule (RGM) families. Netrin-Neogenin interactions result in a chemoattractive axon guidance response and cell-cell adhesion, the interaction between NEO1/Neogenin and RGMa and RGMb induces a chemorepulsive response. The polypeptide is Neogenin (Neo1) (Rattus norvegicus (Rat)).